Here is a 489-residue protein sequence, read N- to C-terminus: Lysine--tRNA ligase (489 aa).

Positions 399 and 406 each coordinate Mg(2+).

Belongs to the class-II aminoacyl-tRNA synthetase family. Homodimer. Mg(2+) serves as cofactor.

It localises to the cytoplasm. The catalysed reaction is tRNA(Lys) + L-lysine + ATP = L-lysyl-tRNA(Lys) + AMP + diphosphate. In Malacoplasma penetrans (strain HF-2) (Mycoplasma penetrans), this protein is Lysine--tRNA ligase.